Consider the following 337-residue polypeptide: 2-oxoglutarate receptor 1 (337 aa).

Residues 1-34 (MNEPLDYLANASDFPDYAAAFGNCTDENIPLKMH) lie on the Extracellular side of the membrane. N-linked (GlcNAc...) asparagine glycans are attached at residues Asn-10 and Asn-23. A helical membrane pass occupies residues 35-55 (YLPVIYGIIFLVGFPGNAVVI). At 56 to 69 (STYIFKMRPWKSST) the chain is on the cytoplasmic side. Residues 70-90 (IIMLNLACTDLLYLTSLPFLI) traverse the membrane as a helical segment. Residues 91 to 116 (HYYASGENWIFGDFMCKFIRFSFHFN) are Extracellular-facing. Cys-106 and Cys-183 form a disulfide bridge. Residues 117–137 (LYSSILFLTCFSIFRYCVIIH) form a helical membrane-spanning segment. Residues 138-151 (PMSCFSIHKTRCAV) are Cytoplasmic-facing. The chain crosses the membrane as a helical span at residues 152–172 (VACAVVWIISLVAVIPMTFLI). Residues 173 to 201 (TSTNRTNRSACLDLTSSDELNTIKWYNLI) are Extracellular-facing. N-linked (GlcNAc...) asparagine glycosylation is found at Asn-176 and Asn-179. The chain crosses the membrane as a helical span at residues 202–222 (LTATTFCLPLVIVTLCYTTII). Over 223 to 242 (HTLTHGLQTDSCLKQKARRL) the chain is Cytoplasmic. A helical membrane pass occupies residues 243-263 (TILLLLAFYVCFLPFHILRVI). Residues 264-284 (RIESRLLSISCSIENQIHEAY) are Extracellular-facing. Residues 285-305 (IVSRPLAALNTFGNLLLYVVV) form a helical membrane-spanning segment. The Cytoplasmic portion of the chain corresponds to 306–337 (SDNFQQAVCSTVRCKVSGNLEQAKKISYSNNP).

Belongs to the G-protein coupled receptor 1 family. In terms of tissue distribution, detected in kidney and, to a lower extent, in placenta. Not detected in brain tissues including the frontal cortex, caudate putamen, thalamus, hypothalamus, hippocampus or pons.

The protein localises to the cell membrane. G protein-coupled receptor for dicarboxylates and amino dicarboxylates. Receptor for itaconate, a metabolite produced by myeloid lineages. In the respiratory epithelium, couples the binding of itaconate to the activation of GNA11 and downstream intracellular Ca(2+) release, leading to mucocilliary clearance of airborne pathogens. Receptor for leukotriene E4 (LTE4) produced by mast cells upon allergic inflammation. Binds with high affinity to LTE4 and elicits mucin release from pulmonary epithelium in response to airborne fungi allergens. Regulates mucin-producing goblet cell homeostasis. Receptor for alpha-ketoglutarate produced by proximal tubule renal cells upon metabolic alkalosis. In an intrarenal paracrine signaling pathway, binds alpha-ketoglutarate and drives transepithelial salt reabsorption and bicarbonate secretion by SLC26A4/pendrin-positive intercalated cells. The polypeptide is 2-oxoglutarate receptor 1 (OXGR1) (Homo sapiens (Human)).